The following is a 237-amino-acid chain: MSTIHSCLDLIRSQIQQSANGRNVLLVAVSKFHPVETLMEAYNAGQRHFGENYMQEFLKKVELMPDDVQWHFIGSLQSSKCKKIASVKNLYSIETIDTEKKARLVNSAREALQLPLNVYIQVNTSGEENKGGVTPSKVLELCKQVQDMKYLRLKGLMTIGSISNSQLSDHNPDFQVLSDLRESLQNELGIPLQLSMGMSSDYLLAIKYGSDSVRVGSSIFGSRPTEKPSDVHISASK.

N6-(pyridoxal phosphate)lysine is present on Lys-31.

This sequence belongs to the pyridoxal phosphate-binding protein YggS/PROSC family.

It is found in the cytoplasm. The protein localises to the nucleus. Pyridoxal 5'-phosphate (PLP)-binding protein, which may be involved in intracellular homeostatic regulation of pyridoxal 5'-phosphate (PLP), the active form of vitamin B6. In Schizosaccharomyces pombe (strain 972 / ATCC 24843) (Fission yeast), this protein is Pyridoxal phosphate homeostasis protein.